A 192-amino-acid chain; its full sequence is RNA pyrophosphohydrolase (192 aa).

Residues 6–149 (GYRPNVGIVI…KKDVYRKVMK (144 aa)) form the Nudix hydrolase domain. The Nudix box signature appears at 38 to 59 (GGINDNETAEQAMYRELYEEAG).

This sequence belongs to the Nudix hydrolase family. RppH subfamily. The cofactor is a divalent metal cation.

Accelerates the degradation of transcripts by removing pyrophosphate from the 5'-end of triphosphorylated RNA, leading to a more labile monophosphorylated state that can stimulate subsequent ribonuclease cleavage. This is RNA pyrophosphohydrolase from Histophilus somni (strain 129Pt) (Haemophilus somnus).